Reading from the N-terminus, the 1094-residue chain is Potassium-transporting ATPase alpha chain 2 (1094 aa).

Residues 1–21 (MAGGAHRADRATGEERKEGGG) are compositionally biased toward basic and acidic residues. A disordered region spans residues 1 to 37 (MAGGAHRADRATGEERKEGGGRWRAPHSPSPPGPRGC). A compositionally biased stretch (pro residues) spans 28–37 (SPSPPGPRGC). Over 56–157 (RYCTLLLFQR…NALTPPKQTP (102 aa)) the chain is Cytoplasmic. Residues 158-178 (EIIKFLKQMVGGFSILLWVGA) form a helical membrane-spanning segment. The Lumenal segment spans residues 179 to 201 (VLCWIAFGIQYVSNPSASLDRVY). The helical transmembrane segment at 202–222 (LGTVLAVVVILTGIFAYYQEA) threads the bilayer. Over 223-358 (KSTNIMASFC…NEKTPIAIEI (136 aa)) the chain is Cytoplasmic. The segment at 286–305 (SSLTGESEPQSRSSGFTHEN) is disordered. Residues 359 to 378 (EHFVHIVAGVAVSVGILFFI) form a helical membrane-spanning segment. Residues 379–390 (IAVCMKYHVLDA) are Lumenal-facing. Residues 391–408 (IIFLIAIIVANVPEGLLA) form a helical membrane-spanning segment. Over 409–842 (TVTVALSLTA…EEGRLIFDNL (434 aa)) the chain is Cytoplasmic. Catalysis depends on Asp446, which acts as the 4-aspartylphosphate intermediate. Mg(2+)-binding residues include Asp787 and Asp791. Residues 843 to 862 (KKTIAYTLTKNIAELCPFLI) form a helical membrane-spanning segment. The Lumenal portion of the chain corresponds to 863-872 (YIILGLPLPI). A helical membrane pass occupies residues 873 to 893 (GTITLLFIDLGTDIIPSIALA). Residues 894 to 913 (YEKAESDIMNRKPRHKKKDR) are Cytoplasmic-facing. The chain crosses the membrane as a helical span at residues 914–936 (LVNQQLAVYSYLHIGLMQALGAF). The Lumenal portion of the chain corresponds to 937-988 (LVYFTVYAQQGFRPTSLFHLRIAWDSDHLNDLEDNYGQEWTSYQRQYLEWTG). The helical transmembrane segment at 989 to 1008 (YTAFFVGIMVQQIADLIIRK) threads the bilayer. At 1009 to 1022 (TRKNSIFKQGLFRN) the chain is on the cytoplasmic side. Ser1013 is modified (phosphoserine; by PKA). A helical membrane pass occupies residues 1023 to 1041 (KVIWVGIASQIIVALLLSY). At 1042-1056 (GLGSITALNFTMLKA) the chain is on the lumenal side. Residues 1057 to 1077 (QYWFVAVPHAILIWVYDEMRK) traverse the membrane as a helical segment. At 1078-1094 (LFIRLYPGSWWDKNMYY) the chain is on the cytoplasmic side.

This sequence belongs to the cation transport ATPase (P-type) (TC 3.A.3) family. Type IIC subfamily. In terms of assembly, the X(+)/K(+) ATPase pump is composed of a catalytic alpha subunit and an auxiliary non-catalytic beta subunit. The alpha subunit pairs with the beta subunit of gastric H(+)/K(+) ATPase ATP4B or the beta subunit of Na(+)/K(+) ATPases ATP1B1 and ATP1B3; this interaction is required for the formation of a functionally active pump and its targeting at the plasma membrane. Found in the skin, kidney, distal colon and brain. In the kidney it is found in the connecting tubule, cortical collecting duct and outer medullary collecting duct while in the brain it is specific to choroid plexus and cortex.

The protein resides in the apical cell membrane. It carries out the reaction K(+)(out) + ATP + H2O + H(+)(in) = K(+)(in) + ADP + phosphate + 2 H(+)(out). It catalyses the reaction K(+)(out) + Na(+)(in) + ATP + H2O = K(+)(in) + Na(+)(out) + ADP + phosphate + H(+). The catalytic subunit of a H(+)/K(+) ATPase and/or Na(+)/K(+) ATPase pump which transports K(+) ions in exchange for Na(+) and/or H(+) ions across the apical membrane of epithelial cells. Uses ATP as an energy source to pump K(+) ions into the cell while transporting Na(+) and/or H(+) ions to the extracellular compartment. Involved in the maintenance of electrolyte homeostasis through K(+) ion absorption in kidney and colon. In the airway epithelium, may play a primary role in mucus acidification regulating its viscosity and clearance. This is Potassium-transporting ATPase alpha chain 2 (ATP12A) from Oryctolagus cuniculus (Rabbit).